Here is a 167-residue protein sequence, read N- to C-terminus: Large ribosomal subunit protein uL23 (167 aa).

Residues Met1 to Lys118 form a large ribosomal subunit protein uL23 region. Disordered regions lie at residues Phe91 to Lys112 and Lys136 to Asn167. Basic and acidic residues-rich tracts occupy residues Gln97–Lys112 and Lys136–Asn157. Residues Lys119–Asn167 are unknown. Residues Gln158–Asn167 are compositionally biased toward polar residues.

It belongs to the universal ribosomal protein uL23 family. Part of the 50S ribosomal subunit. Contacts protein L29, and trigger factor when it is bound to the ribosome.

One of the early assembly proteins it binds 23S rRNA. One of the proteins that surrounds the polypeptide exit tunnel on the outside of the ribosome. Forms the main docking site for trigger factor binding to the ribosome. The polypeptide is Large ribosomal subunit protein uL23 (Mesomycoplasma hyopneumoniae (strain J / ATCC 25934 / NCTC 10110) (Mycoplasma hyopneumoniae)).